We begin with the raw amino-acid sequence, 668 residues long: Cyclin-dependent kinase 11.2 (668 aa).

Residues 1–265 are disordered; sequence MSNYSTNGSR…EQWESMTENE (265 aa). Composition is skewed to basic and acidic residues over residues 35–73, 85–127, and 140–163; these read KTKEERYRDKEKERDHERHHDRERRDDRYRKVDSRDHRD, YCRD…DSLR, and LPDDGKLFDRILDPNYKKKEKTVM. Residues 164–181 are compositionally biased toward acidic residues; it reads EVEDVEMSPVEMLDEEEV. Basic and acidic residues-rich tracts occupy residues 197 to 212 and 245 to 265; these read NEPEEKDYKSEGDPES and PDDKYGKTPDKEQWESMTENE. The Protein kinase domain occupies 304 to 600; that stretch reads YVILNVIAEG…ASEALQHDWF (297 aa). ATP contacts are provided by residues 310 to 318 and Lys-333; that span reads IAEGTYGEV. The active-site Proton acceptor is the Asp-432.

It belongs to the protein kinase superfamily. CMGC Ser/Thr protein kinase family. CDC2/CDKX subfamily. In terms of tissue distribution, expressed in somatic cells and at varying levels throughout the germline (at protein level). Highly expressed in the germ line of hermaphrodites (at protein level).

The protein localises to the nucleus. The protein resides in the cytoplasm. It carries out the reaction L-seryl-[protein] + ATP = O-phospho-L-seryl-[protein] + ADP + H(+). It catalyses the reaction L-threonyl-[protein] + ATP = O-phospho-L-threonyl-[protein] + ADP + H(+). In terms of biological role, probable cyclin-dependent kinase whose activity is most likely regulated by the cyclin cyl-1/Cylin-L. Acts partially redundantly with cdk-11.1 to ensure embryonic viability. In contrast to cdk-11.1, not essential for male and female fertility. The protein is Cyclin-dependent kinase 11.2 of Caenorhabditis elegans.